Reading from the N-terminus, the 123-residue chain is MPTSRPRGIHQGAAAEARAAAHLESLGREIVRRNYRIPGGEIDLVSREPGGTLVFTEVRQRRQARYGSALDSVTPRKLALMHRAALEYLTRECGRDDLPCRLEVLTIEGEADTGELRLLAVEG.

Belongs to the UPF0102 family.

This chain is UPF0102 protein DR_2282, found in Deinococcus radiodurans (strain ATCC 13939 / DSM 20539 / JCM 16871 / CCUG 27074 / LMG 4051 / NBRC 15346 / NCIMB 9279 / VKM B-1422 / R1).